Reading from the N-terminus, the 45-residue chain is DNA replication protein repEB (45 aa).

In terms of biological role, involved in T4 DNA replication. Important for the priming of leading strand DNA synthesis at oriE. Binds to ssDNA. In Enterobacteria phage T4 (Bacteriophage T4), this protein is DNA replication protein repEB (repEB).